Consider the following 187-residue polypeptide: Orotate phosphoribosyltransferase (187 aa).

5-phospho-alpha-D-ribose 1-diphosphate is bound by residues arginine 98, lysine 99, lysine 102, histidine 104, and 128-136; that span reads EDVTTTGGS. Positions 132 and 160 each coordinate orotate.

This sequence belongs to the purine/pyrimidine phosphoribosyltransferase family. PyrE subfamily. Homodimer. Mg(2+) is required as a cofactor.

The enzyme catalyses orotidine 5'-phosphate + diphosphate = orotate + 5-phospho-alpha-D-ribose 1-diphosphate. It participates in pyrimidine metabolism; UMP biosynthesis via de novo pathway; UMP from orotate: step 1/2. Functionally, catalyzes the transfer of a ribosyl phosphate group from 5-phosphoribose 1-diphosphate to orotate, leading to the formation of orotidine monophosphate (OMP). The polypeptide is Orotate phosphoribosyltransferase (Rhodopseudomonas palustris (strain BisB18)).